Reading from the N-terminus, the 326-residue chain is Dipeptide transport ATP-binding protein DppD (326 aa).

The ABC transporter domain occupies 5–255; it reads IRVEDLRAVY…PLHPYTRGLI (251 aa). ATP-binding positions include 44–49, asparagine 61, and glutamine 97; that span reads ASGKST. [4Fe-4S] cluster-binding residues include cysteine 285, cysteine 291, cysteine 298, and cysteine 316.

Belongs to the ABC transporter superfamily.

It localises to the cell membrane. It catalyses the reaction a dipeptide(out) + ATP + H2O = a dipeptide(in) + ADP + phosphate + H(+). With respect to regulation, the C-terminal iron-sulfur cluster may stabilize the structure of the C-terminal loops and may function in the regulation of the transport process. Functionally, part of the ABC transporter Dpp involved in dipeptide transport. Responsible for energy coupling to the transport system. The polypeptide is Dipeptide transport ATP-binding protein DppD (Caldanaerobacter subterraneus subsp. tengcongensis (strain DSM 15242 / JCM 11007 / NBRC 100824 / MB4) (Thermoanaerobacter tengcongensis)).